We begin with the raw amino-acid sequence, 416 residues long: Multifunctional CCA protein (416 aa).

Residues glycine 8 and arginine 11 each contribute to the ATP site. Glycine 8 and arginine 11 together coordinate CTP. Positions 21 and 23 each coordinate Mg(2+). ATP is bound by residues arginine 91, arginine 138, and arginine 141. The CTP site is built by arginine 91, arginine 138, and arginine 141. Residues 229-331 (TGLHQELVSD…YELLQRCDAF (103 aa)) form the HD domain.

The protein belongs to the tRNA nucleotidyltransferase/poly(A) polymerase family. Bacterial CCA-adding enzyme type 1 subfamily. As to quaternary structure, monomer. Can also form homodimers and oligomers. Mg(2+) is required as a cofactor. Requires Ni(2+) as cofactor.

It carries out the reaction a tRNA precursor + 2 CTP + ATP = a tRNA with a 3' CCA end + 3 diphosphate. The enzyme catalyses a tRNA with a 3' CCA end + 2 CTP + ATP = a tRNA with a 3' CCACCA end + 3 diphosphate. Functionally, catalyzes the addition and repair of the essential 3'-terminal CCA sequence in tRNAs without using a nucleic acid template. Adds these three nucleotides in the order of C, C, and A to the tRNA nucleotide-73, using CTP and ATP as substrates and producing inorganic pyrophosphate. tRNA 3'-terminal CCA addition is required both for tRNA processing and repair. Also involved in tRNA surveillance by mediating tandem CCA addition to generate a CCACCA at the 3' terminus of unstable tRNAs. While stable tRNAs receive only 3'-terminal CCA, unstable tRNAs are marked with CCACCA and rapidly degraded. The protein is Multifunctional CCA protein of Xylella fastidiosa (strain M23).